The primary structure comprises 1732 residues: Serine/threonine-protein kinase MRCK alpha (1732 aa).

Positions 77-343 (FEILKVIGRG…IEDFKKHPFF (267 aa)) constitute a Protein kinase domain. Residues 83–91 (IGRGAFGEV) and Lys-106 each bind ATP. Asp-201 serves as the catalytic Proton acceptor. Phosphoserine; by autocatalysis occurs at positions 222 and 234. Thr-240 is modified (phosphothreonine; by autocatalysis). Residues 344–414 (SGIDWDNIRN…TSSCVLSDRS (71 aa)) enclose the AGC-kinase C-terminal domain. 2 coiled-coil regions span residues 437–820 (NNLA…WEAQ) and 880–943 (LELQ…SEKG). Residues 968–1003 (ERSPSCTPASKGRRTVDSTPLSVHTPTLRKKGCPGS) form a disordered region. The Phorbol-ester/DAG-type zinc-finger motif lies at 1012 to 1062 (THQFFVKSFTTPTKCHQCTSLMVGLIRQGCSCEVCGFSCHITCVNKAPTTC). In terms of domain architecture, PH spans 1082–1201 (GTAYEGHVRI…WVGVLSELHK (120 aa)). Position 1127 is a phosphoserine (Ser-1127). The region spanning 1227–1499 (IKTTQAAAII…RPLNNEGSLN (273 aa)) is the CNH domain. Ser-1545 is subject to Phosphoserine. The CRIB domain maps to 1571-1584 (ISNPTNFNHIAHMG). Residues 1591–1732 (ILKDLPMNPR…ESTDRGSWDP (142 aa)) are disordered. A compositionally biased stretch (polar residues) spans 1604 to 1619 (SRTVFSGSVSIPSITK). Phosphoserine occurs at positions 1611, 1613, 1629, 1651, 1664, 1669, and 1693. Low complexity predominate over residues 1625–1640 (GRSMSASSGLSARSSA). The segment covering 1665 to 1674 (PSEGSLSSGG) has biased composition (low complexity). The span at 1697-1707 (STASNSSNLSS) shows a compositional bias: low complexity. Ser-1719 and Ser-1721 each carry phosphoserine.

Belongs to the protein kinase superfamily. AGC Ser/Thr protein kinase family. DMPK subfamily. As to quaternary structure, homodimer and homotetramer via the coiled coil regions. Interacts tightly with GTP-bound but not GDP-bound CDC42. Forms a tripartite complex with MYO18A and LURAP1 with the latter acting as an adapter connecting CDC42BPA and MYO18A. LURAP1 binding results in activation of CDC42BPA by abolition of its negative autoregulation. Interacts with LURAP1. Interacts (via AGC-kinase C-terminal domain) with FAM89B/LRAP25 (via LRR repeat). Forms a tripartite complex with FAM89B/LRAP25 and LIMK1. Mg(2+) serves as cofactor. Post-translationally, proteolytically cleaved by caspases upon apoptosis induction. The cleavage at Asp-478 by CASP3 increases its kinase activity (in vitro). As to expression, abundant in the heart, brain, skeletal muscle, kidney, and pancreas, with little or no expression in the lung and liver.

The protein localises to the cytoplasm. The protein resides in the cell projection. It is found in the lamellipodium. It catalyses the reaction L-seryl-[protein] + ATP = O-phospho-L-seryl-[protein] + ADP + H(+). The catalysed reaction is L-threonyl-[protein] + ATP = O-phospho-L-threonyl-[protein] + ADP + H(+). Its activity is regulated as follows. Maintained in an inactive, closed conformation by an interaction between the kinase domain and the negative autoregulatory C-terminal coiled-coil region. Agonist binding to the phorbol ester binding site disrupts this, releasing the kinase domain to allow N-terminus-mediated dimerization and kinase activation by transautophosphorylation. Inhibited by chelerythrine chloride. In terms of biological role, serine/threonine-protein kinase which is an important downstream effector of CDC42 and plays a role in the regulation of cytoskeleton reorganization and cell migration. Regulates actin cytoskeletal reorganization via phosphorylation of PPP1R12C and MYL9/MLC2. In concert with MYO18A and LURAP1, is involved in modulating lamellar actomyosin retrograde flow that is crucial to cell protrusion and migration. Phosphorylates: PPP1R12A, LIMK1 and LIMK2. May play a role in TFRC-mediated iron uptake. In concert with FAM89B/LRAP25 mediates the targeting of LIMK1 to the lamellipodium resulting in its activation and subsequent phosphorylation of CFL1 which is important for lamellipodial F-actin regulation. Triggers the formation of an extrusion apical actin ring required for epithelial extrusion of apoptotic cells. This is Serine/threonine-protein kinase MRCK alpha from Homo sapiens (Human).